We begin with the raw amino-acid sequence, 544 residues long: Pectinesterase 3 (544 aa).

Asn174, Asn257, and Asn291 each carry an N-linked (GlcNAc...) asparagine glycan. The substrate site is built by Thr306 and Gln336. Asp359 (proton donor) is an active-site residue. Catalysis depends on Asp380, which acts as the Nucleophile. Residues Arg448 and Trp450 each coordinate substrate. Residue Asn532 is glycosylated (N-linked (GlcNAc...) asparagine).

This sequence in the N-terminal section; belongs to the PMEI family. It in the C-terminal section; belongs to the pectinesterase family.

It localises to the secreted. Its subcellular location is the cell wall. It catalyses the reaction [(1-&gt;4)-alpha-D-galacturonosyl methyl ester](n) + n H2O = [(1-&gt;4)-alpha-D-galacturonosyl](n) + n methanol + n H(+). The protein operates within glycan metabolism; pectin degradation; 2-dehydro-3-deoxy-D-gluconate from pectin: step 1/5. Its function is as follows. Acts in the modification of cell walls via demethylesterification of cell wall pectin. In Solanum lycopersicum (Tomato), this protein is Pectinesterase 3 (PME3).